The following is a 579-amino-acid chain: Rho guanine nucleotide exchange factor 25 (579 aa).

Disordered stretches follow at residues 27-61 and 172-194; these read AVPG…GERE and VKAQ…EQKK. Residues 199–375 form the DH domain; that stretch reads RSMFVLSELV…CFVPKRCNDM (177 aa). The interval 317-338 is important for binding to Rho GTPases; sequence LGHRLQLSDLLIKPVQRIMKYQ. The region spanning 380–499 is the PH domain; the sequence is RLRGFEGKLT…ESQTNSLGRS (120 aa). Residues 472 to 498 form a sufficient to bind activated GNAQ region; the sequence is SQRDFLNALQSPIEYQRRESQTNSLGR. Disordered regions lie at residues 487 to 516 and 546 to 579; these read QRRE…VSMH and LSET…EDEL.

Interacts with activated GNAQ and GNA11. Interacts with RHOA, CDC42 and RAC1. Interacts (via the DH domain) with POPDC1 (via the C-terminus cytoplasmic tail).

It localises to the cytoplasm. The protein localises to the myofibril. It is found in the sarcomere. The protein resides in the cell membrane. May play a role in actin cytoskeleton reorganization in different tissues since its activation induces formation of actin stress fibers. It works as a guanine nucleotide exchange factor for Rho family of small GTPases. Links specifically G alpha q/11-coupled receptors to RHOA activation. May be an important regulator of processes involved in axon and dendrite formation. In neurons seems to be an exchange factor primarily for RAC1. Involved in skeletal myogenesis. The protein is Rho guanine nucleotide exchange factor 25 (Arhgef25) of Rattus norvegicus (Rat).